The primary structure comprises 129 residues: Small ribosomal subunit protein uS11 (129 aa).

It belongs to the universal ribosomal protein uS11 family. As to quaternary structure, part of the 30S ribosomal subunit. Interacts with proteins S7 and S18. Binds to IF-3.

Functionally, located on the platform of the 30S subunit, it bridges several disparate RNA helices of the 16S rRNA. Forms part of the Shine-Dalgarno cleft in the 70S ribosome. The chain is Small ribosomal subunit protein uS11 from Dechloromonas aromatica (strain RCB).